We begin with the raw amino-acid sequence, 288 residues long: 4-hydroxy-tetrahydrodipicolinate synthase (288 aa).

Residue T43 coordinates pyruvate. Y131 serves as the catalytic Proton donor/acceptor. The active-site Schiff-base intermediate with substrate is the K160. Residue I200 participates in pyruvate binding.

The protein belongs to the DapA family. As to quaternary structure, homotetramer; dimer of dimers.

The protein localises to the cytoplasm. It catalyses the reaction L-aspartate 4-semialdehyde + pyruvate = (2S,4S)-4-hydroxy-2,3,4,5-tetrahydrodipicolinate + H2O + H(+). It functions in the pathway amino-acid biosynthesis; L-lysine biosynthesis via DAP pathway; (S)-tetrahydrodipicolinate from L-aspartate: step 3/4. In terms of biological role, catalyzes the condensation of (S)-aspartate-beta-semialdehyde [(S)-ASA] and pyruvate to 4-hydroxy-tetrahydrodipicolinate (HTPA). This chain is 4-hydroxy-tetrahydrodipicolinate synthase, found in Methanococcus aeolicus (strain ATCC BAA-1280 / DSM 17508 / OCM 812 / Nankai-3).